A 248-amino-acid chain; its full sequence is MEELIEENNIKIGVLALQGGFKEHVEMVKSIKHCFSECENKYKYSIIVQEVKSVSDIKKLNPHGIILPGGESTSMAIIASSNNDGENIFTFLKEYIKQGNFIWGTCAGSIMLSNNVDGQKVGGQSLIGGLDVLISRNYFGRQIDSFETKINLNLKFSKNNNNSILLENFEAIFIRAPAILDVIDKENVEIIGEYIVTKKDGTKEKVITAVKQNNIIASVFHPELTNDNRFHQYFVQLVLNNHLIKIKI.

L-glutamine is bound at residue 70-72; it reads GES. Cysteine 106 acts as the Nucleophile in catalysis. L-glutamine-binding positions include arginine 136 and 174-175; that span reads IR. Catalysis depends on charge relay system residues histidine 221 and glutamate 223.

The protein belongs to the glutaminase PdxT/SNO family.

It carries out the reaction aldehydo-D-ribose 5-phosphate + D-glyceraldehyde 3-phosphate + L-glutamine = pyridoxal 5'-phosphate + L-glutamate + phosphate + 3 H2O + H(+). The catalysed reaction is L-glutamine + H2O = L-glutamate + NH4(+). It functions in the pathway cofactor biosynthesis; pyridoxal 5'-phosphate biosynthesis. Catalyzes the hydrolysis of glutamine to glutamate and ammonia as part of the biosynthesis of pyridoxal 5'-phosphate. The resulting ammonia molecule is channeled to the active site of pdx1. The protein is Probable pyridoxal 5'-phosphate synthase subunit pdx2 of Dictyostelium discoideum (Social amoeba).